The sequence spans 204 residues: MALKEIVEQTVAGLGYDLVEIERSAGGLLRITIDLPWVPGTAGSEAEQFVTVEDCEKVTRQLLFALEVDGVDYKRLEVSSPGIDRPLRHGQDFERFVGREIDVTLKAPIGAAAGALVNATRKKFRGTLERTQSSNGESGVVPGWQIVWSDAPEVKPGQRVSKKRLPAPLQALGFTLDELKEARLAPIVSFKGRGAKAGTEPNLD.

This sequence belongs to the RimP family.

The protein resides in the cytoplasm. In terms of biological role, required for maturation of 30S ribosomal subunits. The protein is Ribosome maturation factor RimP of Albidiferax ferrireducens (strain ATCC BAA-621 / DSM 15236 / T118) (Rhodoferax ferrireducens).